Here is a 337-residue protein sequence, read N- to C-terminus: Ribonucleoside-diphosphate reductase small subunit (337 aa).

The segment at 1–22 (MDPAVSPASTDPLDTHASGAGA) is disordered. D91, E121, and H124 together coordinate Fe cation. Y128 is an active-site residue. Residues 177 to 197 (FILMILIEGVFFAASFAAIAY) traverse the membrane as a helical segment. Fe cation is bound by residues E184, E218, and H221.

The protein belongs to the ribonucleoside diphosphate reductase small chain family. In terms of assembly, heterotetramer composed of a homodimer of the large subunit (R1) and a homodimer of the small subunit (R2). Larger multisubunit protein complex are also active, composed of (R1)n(R2)n. It depends on Fe cation as a cofactor.

It is found in the host membrane. It catalyses the reaction a 2'-deoxyribonucleoside 5'-diphosphate + [thioredoxin]-disulfide + H2O = a ribonucleoside 5'-diphosphate + [thioredoxin]-dithiol. Functionally, ribonucleoside-diphosphate reductase holoenzyme provides the precursors necessary for viral DNA synthesis. Allows virus growth in non-dividing cells, as well as reactivation from latency in infected hosts. Catalyzes the biosynthesis of deoxyribonucleotides from the corresponding ribonucleotides. In Human herpesvirus 2 (strain 333) (HHV-2), this protein is Ribonucleoside-diphosphate reductase small subunit.